Here is a 393-residue protein sequence, read N- to C-terminus: Methylthioribose kinase (393 aa).

ATP is bound by residues Asn38, Lys53, and 107–109 (EDL). Residue Asp225 participates in substrate binding. 242–244 (DPE) contacts ATP. Arg332 contributes to the substrate binding site.

This sequence belongs to the methylthioribose kinase family. Homodimer.

It catalyses the reaction 5-(methylsulfanyl)-D-ribose + ATP = 5-(methylsulfanyl)-alpha-D-ribose 1-phosphate + ADP + H(+). It functions in the pathway amino-acid biosynthesis; L-methionine biosynthesis via salvage pathway; S-methyl-5-thio-alpha-D-ribose 1-phosphate from S-methyl-5'-thioadenosine (hydrolase route): step 2/2. In terms of biological role, catalyzes the phosphorylation of methylthioribose into methylthioribose-1-phosphate. The protein is Methylthioribose kinase of Bacillus thuringiensis subsp. konkukian (strain 97-27).